A 422-amino-acid polypeptide reads, in one-letter code: Enolase (422 aa).

Gln-161 lines the (2R)-2-phosphoglycerate pocket. The active-site Proton donor is the Glu-203. Mg(2+) contacts are provided by Asp-240, Glu-283, and Asp-310. Residues Lys-335, Arg-364, Ser-365, and Lys-386 each coordinate (2R)-2-phosphoglycerate. Lys-335 serves as the catalytic Proton acceptor.

Belongs to the enolase family. Mg(2+) serves as cofactor.

Its subcellular location is the cytoplasm. It is found in the secreted. The protein localises to the cell surface. It catalyses the reaction (2R)-2-phosphoglycerate = phosphoenolpyruvate + H2O. It participates in carbohydrate degradation; glycolysis; pyruvate from D-glyceraldehyde 3-phosphate: step 4/5. In terms of biological role, catalyzes the reversible conversion of 2-phosphoglycerate (2-PG) into phosphoenolpyruvate (PEP). It is essential for the degradation of carbohydrates via glycolysis. In Deinococcus radiodurans (strain ATCC 13939 / DSM 20539 / JCM 16871 / CCUG 27074 / LMG 4051 / NBRC 15346 / NCIMB 9279 / VKM B-1422 / R1), this protein is Enolase.